Here is a 347-residue protein sequence, read N- to C-terminus: 3-isopropylmalate dehydrogenase (347 aa).

R94, R104, R128, and D219 together coordinate substrate. Residues D219, D243, and D247 each coordinate Mg(2+). 279–291 (GSAPDIAGQGKAD) provides a ligand contact to NAD(+).

Belongs to the isocitrate and isopropylmalate dehydrogenases family. LeuB type 2 subfamily. As to quaternary structure, homodimer. Mg(2+) serves as cofactor. Mn(2+) is required as a cofactor.

Its subcellular location is the cytoplasm. It catalyses the reaction (2R,3S)-3-isopropylmalate + NAD(+) = 4-methyl-2-oxopentanoate + CO2 + NADH. It participates in amino-acid biosynthesis; L-leucine biosynthesis; L-leucine from 3-methyl-2-oxobutanoate: step 3/4. Functionally, catalyzes the oxidation of 3-carboxy-2-hydroxy-4-methylpentanoate (3-isopropylmalate) to 3-carboxy-4-methyl-2-oxopentanoate. The product decarboxylates to 4-methyl-2 oxopentanoate. In Streptomyces griseus subsp. griseus (strain JCM 4626 / CBS 651.72 / NBRC 13350 / KCC S-0626 / ISP 5235), this protein is 3-isopropylmalate dehydrogenase.